The sequence spans 325 residues: NADH-quinone oxidoreductase subunit H (325 aa).

The next 8 helical transmembrane spans lie at 11-31 (ILLT…CGAF), 81-101 (VIFT…FAIV), 114-134 (IGIL…LFAG), 154-174 (LSYE…AGSF), 186-206 (VWNV…GVAV), 237-257 (FFVG…TLFF), 265-285 (LPPF…FILI), and 304-324 (ICLP…LWQA).

It belongs to the complex I subunit 1 family. NDH-1 is composed of 13 different subunits. Subunits NuoA, H, J, K, L, M, N constitute the membrane sector of the complex.

The protein resides in the cell inner membrane. It carries out the reaction a quinone + NADH + 5 H(+)(in) = a quinol + NAD(+) + 4 H(+)(out). In terms of biological role, NDH-1 shuttles electrons from NADH, via FMN and iron-sulfur (Fe-S) centers, to quinones in the respiratory chain. The immediate electron acceptor for the enzyme in this species is believed to be ubiquinone. Couples the redox reaction to proton translocation (for every two electrons transferred, four hydrogen ions are translocated across the cytoplasmic membrane), and thus conserves the redox energy in a proton gradient. This subunit may bind ubiquinone. The polypeptide is NADH-quinone oxidoreductase subunit H (Shigella flexneri serotype 5b (strain 8401)).